Reading from the N-terminus, the 161-residue chain is V-type proton ATPase 16 kDa proteolipid subunit c 2 (161 aa).

Residues 1–15 lie on the Lumenal side of the membrane; the sequence is MSYDLETAERAAYAP. The chain crosses the membrane as a helical span at residues 16-36; it reads FFGYMGAASAQIFTVLGAAYG. The Cytoplasmic segment spans residues 37–58; that stretch reads TAKSAVGICSMGVMRPELIMKS. A helical transmembrane segment spans residues 59–79; sequence VIPVIMAGIIGIYGLVVAMVL. The Lumenal segment spans residues 80–98; the sequence is KGKVTSASAGYDLNKGFAH. Residues 99–119 form a helical membrane-spanning segment; the sequence is LAAGLTCGLCGLGAGYAIGIV. Over 120 to 137 the chain is Cytoplasmic; the sequence is GDAGVRGTAQQPRLFVGM. The chain crosses the membrane as a helical span at residues 138-158; the sequence is ILILIFSEVLGLYGMIVALIL. The Lumenal portion of the chain corresponds to 159–161; the sequence is GTS.

It belongs to the V-ATPase proteolipid subunit family. In terms of assembly, V-ATPase is a heteromultimeric enzyme made up of two complexes: the ATP-hydrolytic V1 complex and the proton translocation V0 complex. The V1 complex consists of three catalytic AB heterodimers that form a heterohexamer, three peripheral stalks each consisting of EG heterodimers, one central rotor including subunits D and F, and the regulatory subunits C and H. The proton translocation complex V0 consists of the proton transport subunit a, a ring of proteolipid subunits c9c'', rotary subunit d, subunits e and f, and the accessory subunits vah-19/Ac45 and vah-20/PRR. As to expression, expressed in the H-shaped excretory cell, rectum, and a pair of cells posterior to the anus.

Its subcellular location is the membrane. Its function is as follows. Proton-conducting pore forming subunit of the V0 complex of vacuolar(H+)-ATPase (V-ATPase), a multisubunit enzyme composed of a peripheral complex (V1) that hydrolyzes ATP and a membrane integral complex (V0) that translocates protons. V-ATPase is responsible for acidifying and maintaining the pH of intracellular compartments and in some cell types, is targeted to the plasma membrane, where it is responsible for acidifying the extracellular environment. Involved in necrotic cell death. Required along with other vacuolar ATPase components for the removal of protein aggregates which form in immature oocytes in the distal gonad. This removal occurs as the oocytes mature and move to the proximal gonad, is triggered by the introduction of sperm through mating and occurs before fertilization. The introduction of sperm triggers V-ATPase accumulation in proximal oocytes and induces lysosomal acidification which leads to engulfing of protein aggregates by lysosomes and subsequent clearance of the aggregates. Lysosomal acidification also leads to changes in mitochondrial morphology and function. Mitochondria in distal immature oocytes are fragmented, produce high levels of reactive oxygen species (ROS) and have high membrane potential, indicative of metabolic inactivity. In contrast, mitochondria in proximal mature oocytes are tubular with lower ROS levels and membrane potential, indicative of an active metabolic state required for aggregate mobilization before clearance. In Caenorhabditis elegans, this protein is V-type proton ATPase 16 kDa proteolipid subunit c 2.